A 159-amino-acid polypeptide reads, in one-letter code: Histone H1 (159 aa).

Disordered stretches follow at residues 1–31 (MAEK…ITEL), 80–99 (KGAE…KKEK), and 132–159 (AAKK…KKKS). Basic residues predominate over residues 10–22 (VTTKKPAATHRRR). Positions 12-102 (TKKPAATHRR…GEGKKEKEKA (91 aa)) constitute an H15 domain. The segment covering 84–93 (CAGGQGTGVG) has biased composition (gly residues). Residues 134-148 (KKVKAAPKKAKKPVK) are compositionally biased toward basic residues. Basic and acidic residues predominate over residues 149 to 159 (KTTEKKEKKKS).

The protein belongs to the histone H1/H5 family.

The protein localises to the nucleus. Its subcellular location is the chromosome. Histones H1 are necessary for the condensation of nucleosome chains into higher-order structures. The polypeptide is Histone H1 (Psammechinus miliaris (Green sea urchin)).